The primary structure comprises 184 residues: 2-C-methyl-D-erythritol 2,4-cyclodiphosphate synthase (184 aa).

Residues D17 and H19 each contribute to the a divalent metal cation site. 4-CDP-2-C-methyl-D-erythritol 2-phosphate is bound by residues 17-19 (DVH) and 47-48 (HS). H55 contacts a divalent metal cation. Residues 74 to 78 (FPNTD), F152, and R155 each bind 4-CDP-2-C-methyl-D-erythritol 2-phosphate.

This sequence belongs to the IspF family. In terms of assembly, homotrimer. A divalent metal cation serves as cofactor.

The catalysed reaction is 4-CDP-2-C-methyl-D-erythritol 2-phosphate = 2-C-methyl-D-erythritol 2,4-cyclic diphosphate + CMP. It participates in isoprenoid biosynthesis; isopentenyl diphosphate biosynthesis via DXP pathway; isopentenyl diphosphate from 1-deoxy-D-xylulose 5-phosphate: step 4/6. Involved in the biosynthesis of isopentenyl diphosphate (IPP) and dimethylallyl diphosphate (DMAPP), two major building blocks of isoprenoid compounds. Catalyzes the conversion of 4-diphosphocytidyl-2-C-methyl-D-erythritol 2-phosphate (CDP-ME2P) to 2-C-methyl-D-erythritol 2,4-cyclodiphosphate (ME-CPP) with a corresponding release of cytidine 5-monophosphate (CMP). In Anaplasma marginale (strain St. Maries), this protein is 2-C-methyl-D-erythritol 2,4-cyclodiphosphate synthase.